Here is a 358-residue protein sequence, read N- to C-terminus: Alanine racemase (358 aa).

Catalysis depends on Lys-34, which acts as the Proton acceptor; specific for D-alanine. Lys-34 carries the post-translational modification N6-(pyridoxal phosphate)lysine. Arg-129 contributes to the substrate binding site. Tyr-254 (proton acceptor; specific for L-alanine) is an active-site residue. Met-302 serves as a coordination point for substrate.

Belongs to the alanine racemase family. It depends on pyridoxal 5'-phosphate as a cofactor.

The enzyme catalyses L-alanine = D-alanine. It functions in the pathway amino-acid biosynthesis; D-alanine biosynthesis; D-alanine from L-alanine: step 1/1. Functionally, catalyzes the interconversion of L-alanine and D-alanine. May also act on other amino acids. This Aliivibrio salmonicida (strain LFI1238) (Vibrio salmonicida (strain LFI1238)) protein is Alanine racemase (alr).